The sequence spans 60 residues: Metallothionein (60 aa).

Methionine 1 carries the N-acetylmethionine modification. A beta region spans residues 1–28 (MDPCECSKTGTCNCGGSCTCKNCSCTTC). 20 residues coordinate a divalent metal cation: cysteine 4, cysteine 6, cysteine 12, cysteine 14, cysteine 18, cysteine 20, cysteine 23, cysteine 25, cysteine 28, cysteine 32, cysteine 33, cysteine 35, cysteine 36, cysteine 40, cysteine 43, cysteine 47, cysteine 49, cysteine 54, cysteine 58, and cysteine 59. Residues 29 to 60 (TKSCCPCCPSGCPKCASGCVCKGKTCDTTCCQ) are alpha.

It belongs to the metallothionein superfamily. Type 1 family.

Functionally, metallothioneins have a high content of cysteine residues that bind various heavy metals. This Pseudopleuronectes americanus (Winter flounder) protein is Metallothionein (mt).